The primary structure comprises 89 residues: MSITAEEKARLIKEYATKEGDTGSPEVQIAILSSRIATLTEHFKSHKKDNHSRRGLLMMVAQRRKLLDYVKGKDEARYQKLISSLGLRR.

This sequence belongs to the universal ribosomal protein uS15 family. As to quaternary structure, part of the 30S ribosomal subunit. Forms a bridge to the 50S subunit in the 70S ribosome, contacting the 23S rRNA.

Functionally, one of the primary rRNA binding proteins, it binds directly to 16S rRNA where it helps nucleate assembly of the platform of the 30S subunit by binding and bridging several RNA helices of the 16S rRNA. In terms of biological role, forms an intersubunit bridge (bridge B4) with the 23S rRNA of the 50S subunit in the ribosome. The sequence is that of Small ribosomal subunit protein uS15 from Dinoroseobacter shibae (strain DSM 16493 / NCIMB 14021 / DFL 12).